The following is a 311-amino-acid chain: Methionyl-tRNA formyltransferase (311 aa).

Position 110-113 (110-113) interacts with (6S)-5,6,7,8-tetrahydrofolate; it reads SLLP.

The protein belongs to the Fmt family.

It catalyses the reaction L-methionyl-tRNA(fMet) + (6R)-10-formyltetrahydrofolate = N-formyl-L-methionyl-tRNA(fMet) + (6S)-5,6,7,8-tetrahydrofolate + H(+). Attaches a formyl group to the free amino group of methionyl-tRNA(fMet). The formyl group appears to play a dual role in the initiator identity of N-formylmethionyl-tRNA by promoting its recognition by IF2 and preventing the misappropriation of this tRNA by the elongation apparatus. The chain is Methionyl-tRNA formyltransferase from Streptococcus agalactiae serotype Ia (strain ATCC 27591 / A909 / CDC SS700).